The chain runs to 745 residues: Phosphoribosylformylglycinamidine synthase subunit PurL (745 aa).

H50 is a catalytic residue. Positions 53 and 92 each coordinate ATP. E94 is a Mg(2+) binding site. Substrate-binding positions include 95 to 98 (SHNH) and R117. The active-site Proton acceptor is H96. D118 contributes to the Mg(2+) binding site. Substrate is bound at residue Q241. D269 provides a ligand contact to Mg(2+). 313 to 315 (ESQ) contacts substrate. ATP is bound by residues D495 and G532. N533 serves as a coordination point for Mg(2+). S535 serves as a coordination point for substrate.

This sequence belongs to the FGAMS family. Monomer. Part of the FGAM synthase complex composed of 1 PurL, 1 PurQ and 2 PurS subunits.

Its subcellular location is the cytoplasm. The catalysed reaction is N(2)-formyl-N(1)-(5-phospho-beta-D-ribosyl)glycinamide + L-glutamine + ATP + H2O = 2-formamido-N(1)-(5-O-phospho-beta-D-ribosyl)acetamidine + L-glutamate + ADP + phosphate + H(+). It participates in purine metabolism; IMP biosynthesis via de novo pathway; 5-amino-1-(5-phospho-D-ribosyl)imidazole from N(2)-formyl-N(1)-(5-phospho-D-ribosyl)glycinamide: step 1/2. Its function is as follows. Part of the phosphoribosylformylglycinamidine synthase complex involved in the purines biosynthetic pathway. Catalyzes the ATP-dependent conversion of formylglycinamide ribonucleotide (FGAR) and glutamine to yield formylglycinamidine ribonucleotide (FGAM) and glutamate. The FGAM synthase complex is composed of three subunits. PurQ produces an ammonia molecule by converting glutamine to glutamate. PurL transfers the ammonia molecule to FGAR to form FGAM in an ATP-dependent manner. PurS interacts with PurQ and PurL and is thought to assist in the transfer of the ammonia molecule from PurQ to PurL. The chain is Phosphoribosylformylglycinamidine synthase subunit PurL from Allorhizobium ampelinum (strain ATCC BAA-846 / DSM 112012 / S4) (Agrobacterium vitis (strain S4)).